The primary structure comprises 249 residues: Zinc finger protein CG30 (249 aa).

Residues 8–66 form an RING-type zinc finger; that stretch reads CHICCSVGEIKNYFLQPVDAITILPIVELHTCRHQLCVMCVRKIAQRGRDKRVECPMCR.

The chain is Zinc finger protein CG30 (CG30) from Orgyia pseudotsugata (Douglas-fir tussock moth).